An 81-amino-acid chain; its full sequence is Large ribosomal subunit protein bL31B (81 aa).

Belongs to the bacterial ribosomal protein bL31 family. Type B subfamily. Part of the 50S ribosomal subunit.

The protein is Large ribosomal subunit protein bL31B of Oceanobacillus iheyensis (strain DSM 14371 / CIP 107618 / JCM 11309 / KCTC 3954 / HTE831).